A 493-amino-acid chain; its full sequence is Uridine 5'-monophosphate synthase (493 aa).

The interval 1–207 (MVAQNSDKMR…VAKYIAAVQI (207 aa)) is OPRTase. The domain linker stretch occupies residues 208-233 (NSDGTFVGGDKGDVVRANDLQRTKLT). The OMPdecase stretch occupies residues 234–493 (YENRANLAKS…WAAYQDRVAK (260 aa)). K320 is a catalytic residue.

In the N-terminal section; belongs to the purine/pyrimidine phosphoribosyltransferase family. This sequence in the C-terminal section; belongs to the OMP decarboxylase family.

The catalysed reaction is orotidine 5'-phosphate + diphosphate = orotate + 5-phospho-alpha-D-ribose 1-diphosphate. It carries out the reaction orotidine 5'-phosphate + H(+) = UMP + CO2. Its pathway is pyrimidine metabolism; UMP biosynthesis via de novo pathway; UMP from orotate: step 1/2. It functions in the pathway pyrimidine metabolism; UMP biosynthesis via de novo pathway; UMP from orotate: step 2/2. The chain is Uridine 5'-monophosphate synthase (r-l) from Drosophila melanogaster (Fruit fly).